The following is a 138-amino-acid chain: TYLQALPYFDRLLNIQPPPREKMFEFYERMHAAYIRPGGVHQDLPLGLMDDIYEFSKNFSLRIDEVEEMLTNNRKTQPYDVYDQVEFDVPIGSRLYTEGYQVPPGATYTAIEAPKGHMLADVVAIIGTQDIVFGEIDR.

Belongs to the complex I 49 kDa subunit family. Core subunit of respiratory chain NADH dehydrogenase (Complex I) which is composed of 45 different subunits. Component of the iron-sulfur (IP) fragment of the enzyme. Interacts with NDUFAF3. Interacts with NDUFAF7. Interacts with CERS2. [4Fe-4S] cluster is required as a cofactor. Post-translationally, dimethylation at Arg-118 by NDUFAF7 takes place after NDUFS2 assembles into the complex I, leading to stabilize the early intermediate complex.

The protein resides in the mitochondrion inner membrane. It catalyses the reaction a ubiquinone + NADH + 5 H(+)(in) = a ubiquinol + NAD(+) + 4 H(+)(out). Its function is as follows. Core subunit of the mitochondrial membrane respiratory chain NADH dehydrogenase (Complex I) which catalyzes electron transfer from NADH through the respiratory chain, using ubiquinone as an electron acceptor. Essential for the catalytic activity and assembly of complex I. Redox-sensitive, critical component of the oxygen-sensing pathway in the pulmonary vasculature which plays a key role in acute pulmonary oxygen-sensing and hypoxic pulmonary vasoconstriction. Plays an important role in carotid body sensing of hypoxia. Essential for glia-like neural stem and progenitor cell proliferation, differentiation and subsequent oligodendrocyte or neuronal maturation. The polypeptide is NADH dehydrogenase [ubiquinone] iron-sulfur protein 2, mitochondrial (Mesocricetus auratus (Golden hamster)).